The primary structure comprises 492 residues: 2,3-bisphosphoglycerate-independent phosphoglycerate mutase (492 aa).

Positions 11 and 61 each coordinate Mn(2+). The active-site Phosphoserine intermediate is Ser-61. Residues His-118, 147–148 (RD), Arg-178, Arg-184, 248–251 (RNDR), and Lys-320 contribute to the substrate site. Residues Asp-386, His-390, Asp-427, His-428, and His-445 each coordinate Mn(2+).

The protein belongs to the BPG-independent phosphoglycerate mutase family. As to quaternary structure, monomer. Mn(2+) is required as a cofactor.

The enzyme catalyses (2R)-2-phosphoglycerate = (2R)-3-phosphoglycerate. It functions in the pathway carbohydrate degradation; glycolysis; pyruvate from D-glyceraldehyde 3-phosphate: step 3/5. Catalyzes the interconversion of 2-phosphoglycerate and 3-phosphoglycerate. The polypeptide is 2,3-bisphosphoglycerate-independent phosphoglycerate mutase (Campylobacter jejuni (strain RM1221)).